A 331-amino-acid chain; its full sequence is Vitamin B12 import system permease protein BtuC (331 aa).

9 helical membrane passes run 20 to 42 (VMLA…FLSP), 62 to 84 (LVAA…VLLG), 91 to 113 (GVLG…LPVM), 117 to 136 (TVFM…ILVG), 148 to 170 (MLLV…FYFS), 190 to 209 (SWHH…WLCL), 240 to 262 (LAIS…VGLV), 277 to 296 (FLLP…SDIW), and 303 to 325 (SAEL…WMLI).

This sequence belongs to the binding-protein-dependent transport system permease family. FecCD subfamily. In terms of assembly, the complex is composed of two ATP-binding proteins (BtuD), two transmembrane proteins (BtuC) and a solute-binding protein (BtuF).

It is found in the cell inner membrane. Part of the ABC transporter complex BtuCDF involved in vitamin B12 import. Involved in the translocation of the substrate across the membrane. In Vibrio vulnificus (strain CMCP6), this protein is Vitamin B12 import system permease protein BtuC.